The sequence spans 69 residues: uncharacterized protein (69 aa).

This is an uncharacterized protein from Treponema pallidum (strain Nichols).